An 854-amino-acid polypeptide reads, in one-letter code: MIDTKNLDSHTPMMQQYLKLKAQHPDILLFYRMGDFYELFYDDAKRASQLMDISLTKRGASAGQPIPMAGVPYHAVENYLAKLVALGESVAICEQIGDPATTKGPVERRVVRIVTPGTLSDEALLNERQDNLLAALWQAPQGFGYATLDITSGRFLVSEPADREAMAAELQRTNPAELLYPETLQDMKLIEHRRGQRRRPLWEFELDTARQQLTLQFGTRDLNGFGIERAQLALRAAGCLLQYAKDTQRTSLPHIRAVTLELQQDGIVMDAATRRNLELTQNLSGGGENTLADVLDRTVTPMGSRMLKRWLHMPTRDITTLTYRQQSIRALQDHVAELQPLLRQVGDLERVLARLALRSARPRDLARMRYAFTQLPAIQALLCGQSEPYLPQLLDRVGEFETLRDLLARAIIEAPPVLVRDGGVIAPGYHAELDEWRGLAAGATDYLDRLELREREKTGLETLKVGFNAVHGYFIQLSRGQSHLVPIHYVRRQTLKNAERYIIPELKEYEDKVLTSKSKALALEKALYDELFDLLLPHLAALQQSATALAELDVLSNLAERAETLRYVCPTIDARQGIHISGGRHPVVEHVLSEPFIANPLTLSDARRMLIITGPNMGGKSTYMRQTALIVLLAYIGSFVPADEATIGPIDRIFTRVGAADDLASGRSTFMVEMTETANILHNATHQSLVLMDEIGRGTSTYDGLSLAWASAESLAGRIKAMTLFATHYFELTTLPEKMEGVVNVHLDAVEHGDTIAFMHSVQEGAASKSYGLSVAALAGVPREVIKRARQKLRELETLSTGAAAGSVDGSQLSLLQPEEQPVAPAVEALENLDPDSLSPRQALEWLYRLKKML.

Gly-614–Ser-621 is an ATP binding site.

The protein belongs to the DNA mismatch repair MutS family.

Its function is as follows. This protein is involved in the repair of mismatches in DNA. It is possible that it carries out the mismatch recognition step. This protein has a weak ATPase activity. This chain is DNA mismatch repair protein MutS, found in Sodalis glossinidius (strain morsitans).